Reading from the N-terminus, the 519-residue chain is Pleckstrin homology domain-containing family A member 8 (519 aa).

A PH domain is found at 1 to 93 (MEGVLYKWTN…WLVALGSAKA (93 aa)). Threonine 139 carries the phosphothreonine modification. At serine 145 the chain carries Phosphoserine. Phosphothreonine is present on threonine 153. Residues 274-302 (GEDNLGNHDSSLAQPASDSSSSPPESHWE) are disordered. Residues 282-298 (DSSLAQPASDSSSSPPE) show a composition bias toward low complexity. The tract at residues 310–519 (TFFSTMNTSF…VHGLESDEVV (210 aa)) is glycolipid transfer protein homology domain.

In terms of assembly, homodimer. Interacts with ARF1; the interaction together with phosphatidylinositol 4-phosphate binding is required for FAPP2 GlcCer transfer ability.

The protein resides in the golgi apparatus. It localises to the trans-Golgi network membrane. The protein localises to the membrane. Cargo transport protein that is required for apical transport from the trans-Golgi network (TGN). Transports AQP2 from the trans-Golgi network (TGN) to sites of AQP2 phosphorylation. Mediates the non-vesicular transport of glucosylceramide (GlcCer) from the trans-Golgi network (TGN) to the plasma membrane and plays a pivotal role in the synthesis of complex glycosphingolipids. Binding of both phosphatidylinositol 4-phosphate (PIP) and ARF1 are essential for the GlcCer transfer ability. Also required for primary cilium formation, possibly by being involved in the transport of raft lipids to the apical membrane, and for membrane tubulation. The protein is Pleckstrin homology domain-containing family A member 8 (PLEKHA8) of Canis lupus familiaris (Dog).